The sequence spans 127 residues: Putative truncated L-serine dehydratase YIL168W (127 aa).

N6-(pyridoxal phosphate)lysine is present on Lys-39.

It belongs to the serine/threonine dehydratase family. Requires pyridoxal 5'-phosphate as cofactor.

The protein resides in the cytoplasm. The catalysed reaction is L-serine = pyruvate + NH4(+). Its pathway is carbohydrate biosynthesis; gluconeogenesis. The polypeptide is Putative truncated L-serine dehydratase YIL168W (Saccharomyces cerevisiae (strain ATCC 204508 / S288c) (Baker's yeast)).